The primary structure comprises 185 residues: Small ribosomal subunit protein uS5c (185 aa).

In terms of domain architecture, S5 DRBM spans 26 to 89 (FVERLIKISR…ADGRKNLIKI (64 aa)).

It belongs to the universal ribosomal protein uS5 family. Part of the 30S ribosomal subunit. Contacts protein S4.

The protein resides in the plastid. It is found in the chloroplast. Functionally, with S4 and S12 plays an important role in translational accuracy. This chain is Small ribosomal subunit protein uS5c (rps5), found in Trieres chinensis (Marine centric diatom).